Here is a 456-residue protein sequence, read N- to C-terminus: Bifunctional protein GlmU (456 aa).

Residues 1-229 (MSTSPLSVVI…LSEVEGVNNR (229 aa)) form a pyrophosphorylase region. UDP-N-acetyl-alpha-D-glucosamine contacts are provided by residues 11-14 (LAAG), Lys-25, Gln-76, 81-82 (GT), 103-105 (YGD), Gly-140, Glu-154, Asn-169, and Asn-227. Asp-105 is a Mg(2+) binding site. Asn-227 contacts Mg(2+). The interval 230 to 250 (LQLSALERAYQQQQAQRLLLA) is linker. An N-acetyltransferase region spans residues 251-456 (GVMLTDPARF…SGWERPVKKK (206 aa)). Arg-333 and Lys-351 together coordinate UDP-N-acetyl-alpha-D-glucosamine. His-363 (proton acceptor) is an active-site residue. 2 residues coordinate UDP-N-acetyl-alpha-D-glucosamine: Tyr-366 and Asn-377. Residues Ala-380, 386 to 387 (NY), Ser-405, Ala-423, and Arg-440 each bind acetyl-CoA.

This sequence in the N-terminal section; belongs to the N-acetylglucosamine-1-phosphate uridyltransferase family. It in the C-terminal section; belongs to the transferase hexapeptide repeat family. As to quaternary structure, homotrimer. Mg(2+) is required as a cofactor.

The protein localises to the cytoplasm. The catalysed reaction is alpha-D-glucosamine 1-phosphate + acetyl-CoA = N-acetyl-alpha-D-glucosamine 1-phosphate + CoA + H(+). It catalyses the reaction N-acetyl-alpha-D-glucosamine 1-phosphate + UTP + H(+) = UDP-N-acetyl-alpha-D-glucosamine + diphosphate. It functions in the pathway nucleotide-sugar biosynthesis; UDP-N-acetyl-alpha-D-glucosamine biosynthesis; N-acetyl-alpha-D-glucosamine 1-phosphate from alpha-D-glucosamine 6-phosphate (route II): step 2/2. The protein operates within nucleotide-sugar biosynthesis; UDP-N-acetyl-alpha-D-glucosamine biosynthesis; UDP-N-acetyl-alpha-D-glucosamine from N-acetyl-alpha-D-glucosamine 1-phosphate: step 1/1. It participates in bacterial outer membrane biogenesis; LPS lipid A biosynthesis. Catalyzes the last two sequential reactions in the de novo biosynthetic pathway for UDP-N-acetylglucosamine (UDP-GlcNAc). The C-terminal domain catalyzes the transfer of acetyl group from acetyl coenzyme A to glucosamine-1-phosphate (GlcN-1-P) to produce N-acetylglucosamine-1-phosphate (GlcNAc-1-P), which is converted into UDP-GlcNAc by the transfer of uridine 5-monophosphate (from uridine 5-triphosphate), a reaction catalyzed by the N-terminal domain. The polypeptide is Bifunctional protein GlmU (Edwardsiella ictaluri (strain 93-146)).